Reading from the N-terminus, the 537-residue chain is Sodium/hydrogen exchanger 9B2 (537 aa).

Residues 1-10 are compositionally biased toward basic and acidic residues; it reads MGDEDKRITY. A disordered region spans residues 1–33; it reads MGDEDKRITYEDSEPSTGMNYTPSMHQETQEET. Residues 1-86 are Cytoplasmic-facing; the sequence is MGDEDKRITY…ACPPHGLLDR (86 aa). Residues 15 to 27 are compositionally biased toward polar residues; the sequence is PSTGMNYTPSMHQ. Position 49 is a phosphoserine (S49). A helical transmembrane segment spans residues 87–104; that stretch reads VVTNVTIIVLLWAVIWSI. The Extracellular segment spans residues 105 to 113; sequence TGSECLPGG. A helical transmembrane segment spans residues 114-133; the sequence is NLFGIIILFYCAIIGGKLLG. The Cytoplasmic portion of the chain corresponds to 134-144; sequence LIKLPTLPPLP. Residues 145 to 161 form a helical membrane-spanning segment; that stretch reads SLLGMLLAGFLIRNIPV. At 162-171 the chain is on the extracellular side; sequence INDNVQIKHK. A helical transmembrane segment spans residues 172 to 189; that stretch reads WSSSLRSIALSIILVRAG. Residues 190–200 are Cytoplasmic-facing; sequence LGLDSKALKKL. Residues 201 to 227 form a helical membrane-spanning segment; that stretch reads KGVCVRLSMGPCIVEACTSALLAHYLL. The Extracellular portion of the chain corresponds to 228-233; sequence GLPWQW. A helical membrane pass occupies residues 234 to 242; the sequence is GFILGFVLG. At 243–270 the chain is on the cytoplasmic side; it reads AVSPAVVVPSMLLLQGGGYGVEKGVPTL. V244, G275, D278, and D279 together coordinate Na(+). The chain crosses the membrane as a helical span at residues 271–290; sequence LMAAGSFDDILAITGFNTCL. Residues 291–300 are Extracellular-facing; it reads GIAFSTGSTV. The chain crosses the membrane as a helical span at residues 301-324; that stretch reads FNVLRGVLEVVIGVATGSVLGFFI. Residues 325-339 are Cytoplasmic-facing; the sequence is QYFPSCDQDKLVCKR. A helical membrane pass occupies residues 340-357; sequence TFLVLGLSVLAVFSSVHF. Residues 358-361 are Extracellular-facing; sequence GFPG. Residues 362–373 form a helical membrane-spanning segment; that stretch reads SGGLCTLVMAFL. The Cytoplasmic portion of the chain corresponds to 374 to 390; it reads AGMGWTSEKAEVEKIIA. Residues 391–411 form a helical membrane-spanning segment; sequence VAWDIFQPLLFGLIGAEVSIA. The Extracellular segment spans residues 412–417; the sequence is SLRPET. A helical transmembrane segment spans residues 418–440; sequence VGLCVATVGIAVLIRILTTFLMV. The Cytoplasmic segment spans residues 441 to 461; the sequence is CFAGFNLKEKIFISFAWLPKA. A helical transmembrane segment spans residues 462-473; sequence TVQAAIGSVALD. Topologically, residues 474-486 are extracellular; it reads TARSHGEKQLEDY. Residues 487-509 form a helical membrane-spanning segment; the sequence is GMDVLTVAFLSILITAPIGSLLI. Residues 510–537 lie on the Cytoplasmic side of the membrane; it reads GLLGPRLLQKVEHQNKDEEVQGETSVQV.

The protein belongs to the monovalent cation:proton antiporter 1 (CPA1) transporter (TC 2.A.36) family. In terms of assembly, homodimer; dimerization is essential for SLC9B2 activity. Lipids seem to play a role in the stabilization of the dimerization subdomain.

It localises to the cell membrane. The protein localises to the mitochondrion membrane. Its subcellular location is the endosome membrane. The protein resides in the recycling endosome membrane. It is found in the cytoplasmic vesicle. It localises to the secretory vesicle. The protein localises to the synaptic vesicle membrane. Its subcellular location is the basolateral cell membrane. The protein resides in the apical cell membrane. It carries out the reaction Li(+)(out) + H(+)(in) = Li(+)(in) + H(+)(out). The enzyme catalyses Li(+)(in) + Na(+)(out) = Li(+)(out) + Na(+)(in). It catalyses the reaction Na(+)(in) + H(+)(out) = Na(+)(out) + H(+)(in). With respect to regulation, allosterically inhibited by the N-terminal domain. Inhibited by phloretin. Functionally, electroneutral Na(+) Li(+)/H(+) antiporter that extrudes Na(+) or Li(+) in exchange for external protons across the membrane. Uses the proton gradient/membrane potential to extrude sodium. Contributes to the regulation of intracellular pH and sodium homeostasis. Also able to mediate Na(+)/Li(+) antiporter activity in kidney. May play a physiological role in renal tubular function and blood pressure homeostasis. Plays an important role for insulin secretion and clathrin-mediated endocytosis in beta-cells. Involved in sperm motility and fertility. It is controversial whether SLC9B2 plays a role in osteoclast differentiation or not. This is Sodium/hydrogen exchanger 9B2 (SLC9B2) from Pongo abelii (Sumatran orangutan).